We begin with the raw amino-acid sequence, 264 residues long: Myozenin-2 (264 aa).

At arginine 53 the chain carries Omega-N-methylarginine. The tract at residues 90-135 (GKVDGSNLEGGSQQAPLTPPNTPDPRSPPNPDNIAPGYSGPLKEIP) is disordered. The residue at position 101 (serine 101) is a Phosphoserine. A compositionally biased stretch (pro residues) spans 106–120 (LTPPNTPDPRSPPNP). Phosphothreonine is present on residues threonine 107 and threonine 111. At serine 116 the chain carries Phosphoserine.

This sequence belongs to the myozenin family. As to quaternary structure, interacts via its C-terminus with spectrin repeats 3 and 4 of ACTN2. Interacts with ACTN1, LDB3, MYOT and PPP3CA.

Its subcellular location is the cytoplasm. It is found in the myofibril. The protein localises to the sarcomere. It localises to the z line. Myozenins may serve as intracellular binding proteins involved in linking Z line proteins such as alpha-actinin, gamma-filamin, TCAP/telethonin, LDB3/ZASP and localizing calcineurin signaling to the sarcomere. Plays an important role in the modulation of calcineurin signaling. May play a role in myofibrillogenesis. This is Myozenin-2 (MYOZ2) from Pongo abelii (Sumatran orangutan).